Here is a 423-residue protein sequence, read N- to C-terminus: F-box/LRR-repeat protein 2 (423 aa).

Residues Gly-9–Ile-55 enclose the F-box domain. LRR repeat units lie at residues Gln-61–Gly-87, Cys-88–Gly-113, Cys-114–Ser-139, Cys-140–Trp-165, Cys-166–Gly-191, Cys-192–Ser-217, Cys-218–Gly-243, Cys-244–Arg-269, Cys-270–Glu-295, Cys-296–His-321, Cys-322–Asn-350, Cys-351–Asp-375, and Cys-376–Ala-401. The segment at Leu-80 to Gly-90 is interaction with Calmodulin. Residue Lys-201 forms a Glycyl lysine isopeptide (Lys-Gly) (interchain with G-Cter in ubiquitin) linkage. Thr-404 carries the post-translational modification Phosphothreonine. Residue Cys-420 is the site of S-geranylgeranyl cysteine attachment. The short motif at Cys-420 to Leu-423 is the CAAX motif element.

As to quaternary structure, part of the SCF (SKP1-CUL1-F-box) E3 ubiquitin-protein ligase complex SCF(FBXL2) composed of CUL1, SKP1, RBX1 and FBXL2. Interacts with calmodulin; may antagonize substrate ubiquitination by SCF(FBXL2). May interact with PIK3R1. Interacts with PTPN13. Post-translationally, phosphorylated by GSK-beta (GSK3B), promoting recognition by FBXO3, leading to its ubiquitination by the SCF(FBXO3) complex. In terms of processing, ubiquitinated at Lys-201 by the SCF(FBXO3) complex in response to lipopolysaccharide (LPS), leading to its degradation by the proteasome.

The protein resides in the membrane. It participates in protein modification; protein ubiquitination. Calcium-activated substrate recognition component of the SCF (SKP1-cullin-F-box protein) E3 ubiquitin-protein ligase complex, SCF(FBXL2), which mediates the ubiquitination and subsequent proteasomal degradation of target proteins. Unlike many F-box proteins, FBXL2 does not seem to target phosphodegron within its substrates but rather calmodulin-binding motifs and is thereby antagonized by calmodulin. This is the case for the cyclins CCND2 and CCND3 which polyubiquitination and subsequent degradation are inhibited by calmodulin. Through CCND2 and CCND3 degradation induces cell-cycle arrest in G(0). SCF(FBXL2) also mediates PIK3R2 ubiquitination and proteasomal degradation thereby regulating phosphatidylinositol 3-kinase signaling and autophagy. PCYT1A monoubiquitination by SCF(FBXL2) and subsequent degradation regulates synthesis of phosphatidylcholine, which is utilized for formation of membranes and of pulmonary surfactant. The SCF(FBXL2) complex acts as a regulator of inflammation by mediating ubiquitination and degradation of TRAF proteins (TRAF1, TRAF2, TRAF3, TRAF4, TRAF5 and TRAF6). The SCF(FBXL2) complex acts as a negative regulator of the NLRP3 inflammasome by mediating ubiquitination and degradation of NLRP3. This chain is F-box/LRR-repeat protein 2, found in Bos taurus (Bovine).